Here is a 279-residue protein sequence, read N- to C-terminus: Energy-coupling factor transporter ATP-binding protein EcfA1 (279 aa).

The ABC transporter domain occupies 5–240 (ITVNNLFFKY…GNRLISLGLD (236 aa)). ATP is bound at residue 40–47 (GHNGSGKS).

Belongs to the ABC transporter superfamily. Energy-coupling factor EcfA family. As to quaternary structure, forms a stable energy-coupling factor (ECF) transporter complex composed of 2 membrane-embedded substrate-binding proteins (S component), 2 ATP-binding proteins (A component) and 2 transmembrane proteins (T component).

The protein localises to the cell membrane. Functionally, ATP-binding (A) component of a common energy-coupling factor (ECF) ABC-transporter complex. Unlike classic ABC transporters this ECF transporter provides the energy necessary to transport a number of different substrates. This is Energy-coupling factor transporter ATP-binding protein EcfA1 from Streptococcus agalactiae serotype Ia (strain ATCC 27591 / A909 / CDC SS700).